A 631-amino-acid polypeptide reads, in one-letter code: MPIHILPPQLANQIAAGEVVERPASVVKELVENSLDAGASRIQIDIENGGATLIRIRDNGLGIAKEDLSLALARHATSKISCLDDLEAILSLGFRGEALASISSVSRLTLTSRTAEQKEAWQVYAQGRDMETTIKPASHPVGTTVEVANLFFNTPARRKFLRTEKTEFAHIDEVVRRIALAKPQIAFTLTHNGKILRQYKSAVEIEQKLKRVSAICGEDFVQNALQIDWKHDNLHLSGWVAVPNFHRPQNDLSYSYVNGRMIRDKVINHAIRQAYGDYLTNEQYPAFVLYLDLDPNEVDVNVHPTKHEVRFHQARLIHDFICQGVGNALQSEQADFARYDTPASADEIQEPAANWHSSLIKPNRSAAGHNIFESASDKNISGANTYSHGSAKINRFSTKFAENIPHFSTKSVSKTEQKLYGNLLTTPAEAKKNTAINAESENSFEKNVSTPQQSTQLSGQFLHSLALVKNQALLLQQGQDFYLLPLAKLQKLKFELTLQQPDIAQQPLLIPILFRLNERQLAQWQKQKNFFLQSGFEFDENPAQHRITLNKVPSCLRQQNLQGCVIRLLEENHEKISDFLTALCNQLQLNEIHVLADALTLLTEVELLLKTQNKIQLAQLLISVDFTQYLQ.

It belongs to the DNA mismatch repair MutL/HexB family.

Its function is as follows. This protein is involved in the repair of mismatches in DNA. It is required for dam-dependent methyl-directed DNA mismatch repair. May act as a 'molecular matchmaker', a protein that promotes the formation of a stable complex between two or more DNA-binding proteins in an ATP-dependent manner without itself being part of a final effector complex. The protein is DNA mismatch repair protein MutL of Mannheimia succiniciproducens (strain KCTC 0769BP / MBEL55E).